The primary structure comprises 116 residues: Urease subunit beta (116 aa).

The segment at 97-116 is disordered; sequence IQGPLDAGTAETAPGLPQQP.

The protein belongs to the urease beta subunit family. As to quaternary structure, heterotrimer of UreA (gamma), UreB (beta) and UreC (alpha) subunits. Three heterotrimers associate to form the active enzyme.

The protein localises to the cytoplasm. The enzyme catalyses urea + 2 H2O + H(+) = hydrogencarbonate + 2 NH4(+). It functions in the pathway nitrogen metabolism; urea degradation; CO(2) and NH(3) from urea (urease route): step 1/1. The polypeptide is Urease subunit beta (Paracidovorax citrulli (strain AAC00-1) (Acidovorax citrulli)).